The following is a 497-amino-acid chain: Glycerol kinase (497 aa).

Threonine 12 is a binding site for ADP. The ATP site is built by threonine 12, threonine 13, and serine 14. Threonine 12 lines the sn-glycerol 3-phosphate pocket. Position 16 (arginine 16) interacts with ADP. Sn-glycerol 3-phosphate-binding residues include arginine 82, glutamate 83, tyrosine 134, and aspartate 243. 5 residues coordinate glycerol: arginine 82, glutamate 83, tyrosine 134, aspartate 243, and glutamine 244. 2 residues coordinate ADP: threonine 265 and glycine 308. ATP contacts are provided by threonine 265, glycine 308, glutamine 312, and glycine 411. Position 411 (glycine 411) interacts with ADP.

Belongs to the FGGY kinase family.

It carries out the reaction glycerol + ATP = sn-glycerol 3-phosphate + ADP + H(+). Its pathway is polyol metabolism; glycerol degradation via glycerol kinase pathway; sn-glycerol 3-phosphate from glycerol: step 1/1. Its activity is regulated as follows. Inhibited by fructose 1,6-bisphosphate (FBP). Functionally, key enzyme in the regulation of glycerol uptake and metabolism. Catalyzes the phosphorylation of glycerol to yield sn-glycerol 3-phosphate. This Xanthobacter autotrophicus (strain ATCC BAA-1158 / Py2) protein is Glycerol kinase.